The sequence spans 371 residues: UPF0284 protein tll2306 (371 aa).

Belongs to the UPF0284 family.

This chain is UPF0284 protein tll2306, found in Thermosynechococcus vestitus (strain NIES-2133 / IAM M-273 / BP-1).